A 310-amino-acid polypeptide reads, in one-letter code: GTPase Era (310 aa).

Positions 17 to 184 constitute an Era-type G domain; the sequence is RSGFVALIGA…MDYLAERLPE (168 aa). The interval 25 to 32 is G1; it reads GATNAGKS. A GTP-binding site is contributed by 25–32; sequence GATNAGKS. The segment at 51–55 is G2; that stretch reads QTTRA. The interval 72–75 is G3; sequence DTPG. GTP-binding positions include 72–76 and 134–137; these read DTPGI and NKVD. A G4 region spans residues 134–137; it reads NKVD. The interval 163 to 165 is G5; sequence ISA. The KH type-2 domain maps to 215-292; that stretch reads LHQELPYASH…HLFLFVKVRE (78 aa).

Belongs to the TRAFAC class TrmE-Era-EngA-EngB-Septin-like GTPase superfamily. Era GTPase family. As to quaternary structure, monomer.

The protein localises to the cytoplasm. It localises to the cell inner membrane. In terms of biological role, an essential GTPase that binds both GDP and GTP, with rapid nucleotide exchange. Plays a role in 16S rRNA processing and 30S ribosomal subunit biogenesis and possibly also in cell cycle regulation and energy metabolism. This chain is GTPase Era, found in Sinorhizobium medicae (strain WSM419) (Ensifer medicae).